A 754-amino-acid polypeptide reads, in one-letter code: FAD-dependent monooxygenase ntnA (754 aa).

Residues 3 to 23 (IPFKVLIIGGGVAGLTLAIML) traverse the membrane as a helical segment. FAD contacts are provided by E34, G48, and R109. Y218 is an active-site residue. FAD-binding residues include D311 and A324. 4 consecutive transmembrane segments (helical) span residues 446–466 (PLAT…PWLA), 486–506 (AEVL…MWVI), 536–556 (ILPI…YYYM), and 563–583 (LGVA…SAVC). A glycan (N-linked (GlcNAc...) asparagine) is linked at N586. The helical transmembrane segment at 595-615 (SWWFTADFAFPVVAYLSGMFL) threads the bilayer. The N-linked (GlcNAc...) asparagine glycan is linked to N616. The next 2 membrane-spanning stretches (helical) occupy residues 644–664 (IAFV…TTIL) and 679–697 (LASL…AWEL). Residue N701 is glycosylated (N-linked (GlcNAc...) asparagine). A helical transmembrane segment spans residues 712-732 (LTILSSTIFGGPAATLAGTFI).

This sequence belongs to the paxM FAD-dependent monooxygenase family. It depends on FAD as a cofactor.

It localises to the membrane. Its pathway is secondary metabolite biosynthesis; terpenoid biosynthesis. FAD-dependent monooxygenase; part of the gene cluster that mediates the biosynthesis of the meroterpenoids nectripenoids A and B, as well as cochliquninone D and isocochliquninone E. The pathway probably begins with the HR-PKS ntnH that catalyzes two chain-extension steps to form a reduced triketide, which then primes the SAT domain in the NR-PKS ntnG to initiate three more cycles of extension to give a linear hexaketide corresponding to the polyketide part of nectripenoids. The FAD-dependent monooxygenase ntnJ then performs an oxidative decarboxylation at C11 of the ntnH/ntnG product, via an electrophilic aromatic hydroxylation with concomitant ipso-decarboxylation. The membrane-bound polyprenyl transferase ntnF then introduces a farnesyl group before the FAD-dependent monooxygenase ntnK functions as the first epoxidase on terminal C12'-C13' olefin, followed by a second epoxidation on C7'-C8' catalyzed by ntnA. The terpene cyclase/mutase ntnI then initiates the sequential tricyclic ring formation through protonation of the terminal epoxide and catalyzes the regioselective and stereoselective 6/6/6-tricyclic ring formation. The cytochrome P450 monooxygenase ntnM may then hydroxylate C1'. This is FAD-dependent monooxygenase ntnA from Nectria sp.